Consider the following 344-residue polypeptide: Arginine N-succinyltransferase (344 aa).

Leucine 125 provides a ligand contact to succinyl-CoA. The active-site Proton donor is histidine 229.

It belongs to the arginine N-succinyltransferase family.

It catalyses the reaction succinyl-CoA + L-arginine = N(2)-succinyl-L-arginine + CoA + H(+). It functions in the pathway amino-acid degradation; L-arginine degradation via AST pathway; L-glutamate and succinate from L-arginine: step 1/5. Catalyzes the transfer of succinyl-CoA to arginine to produce N(2)-succinylarginine. In Enterobacter sp. (strain 638), this protein is Arginine N-succinyltransferase.